The sequence spans 399 residues: Subtilisin-like protease CPC735_033790 (399 aa).

Positions 1-20 are cleaved as a signal peptide; sequence MGFLSSAILLLITAFPAAQA. Positions 21–117 are excised as a propeptide; it reads GEMINAAAGA…VEPDRMVNIT (97 aa). Residues 37–116 enclose the Inhibitor I9 domain; that stretch reads SYIVVMNEGI…YVEPDRMVNI (80 aa). The N-linked (GlcNAc...) asparagine glycan is linked to asparagine 115. Residues 127 to 399 form the Peptidase S8 domain; the sequence is SYGLGRISNK…NRLLYNNSGV (273 aa). Residues aspartate 159 and histidine 190 each act as charge relay system in the active site. N-linked (GlcNAc...) asparagine glycosylation occurs at asparagine 251. The Charge relay system role is filled by serine 345. A glycan (N-linked (GlcNAc...) asparagine) is linked at asparagine 395.

This sequence belongs to the peptidase S8 family.

Its subcellular location is the secreted. Secreted subtilisin-like serine protease with keratinolytic activity that contributes to pathogenicity. This chain is Subtilisin-like protease CPC735_033790, found in Coccidioides posadasii (strain C735) (Valley fever fungus).